Reading from the N-terminus, the 229-residue chain is Lactate utilization protein C (229 aa).

The protein belongs to the LutC/YkgG family.

Is involved in L-lactate degradation and allows cells to grow with lactate as the sole carbon source. In Shouchella clausii (strain KSM-K16) (Alkalihalobacillus clausii), this protein is Lactate utilization protein C.